Consider the following 179-residue polypeptide: MPLNVQDKKAIVADVGAQLAGAQTVVLAEYRGIPVEQLTKLRASARDQGVYLRVLKNTLARRAAQGTQFEPLADSMVGPLIYGISADPIASAKVLQNFAKTQDKLVITAGLYNGKLLDVAGVKALATIPSRDELLSQLLGVMLAPVSAMARVLGAVAAQKAAGAPAEAGTEANETPAAE.

It belongs to the universal ribosomal protein uL10 family. Part of the ribosomal stalk of the 50S ribosomal subunit. The N-terminus interacts with L11 and the large rRNA to form the base of the stalk. The C-terminus forms an elongated spine to which L12 dimers bind in a sequential fashion forming a multimeric L10(L12)X complex.

Functionally, forms part of the ribosomal stalk, playing a central role in the interaction of the ribosome with GTP-bound translation factors. In Polynucleobacter necessarius subsp. necessarius (strain STIR1), this protein is Large ribosomal subunit protein uL10.